We begin with the raw amino-acid sequence, 113 residues long: UPF0342 protein SZO_10960 (113 aa).

This sequence belongs to the UPF0342 family.

The chain is UPF0342 protein SZO_10960 from Streptococcus equi subsp. zooepidemicus (strain H70).